The following is a 284-amino-acid chain: 2-dehydro-3-deoxyphosphooctonate aldolase (284 aa).

Belongs to the KdsA family.

It is found in the cytoplasm. It carries out the reaction D-arabinose 5-phosphate + phosphoenolpyruvate + H2O = 3-deoxy-alpha-D-manno-2-octulosonate-8-phosphate + phosphate. Its pathway is carbohydrate biosynthesis; 3-deoxy-D-manno-octulosonate biosynthesis; 3-deoxy-D-manno-octulosonate from D-ribulose 5-phosphate: step 2/3. It functions in the pathway bacterial outer membrane biogenesis; lipopolysaccharide biosynthesis. This chain is 2-dehydro-3-deoxyphosphooctonate aldolase, found in Yersinia enterocolitica serotype O:8 / biotype 1B (strain NCTC 13174 / 8081).